A 310-amino-acid chain; its full sequence is 26S proteasome non-ATPase regulatory subunit 14 (310 aa).

An MPN domain is found at 31-166; that stretch reads VYISSLALLK…IDAFRLINAN (136 aa). Residues H113, H115, and D126 each contribute to the Zn(2+) site. The JAMM motif signature appears at 113-126; sequence HSHPGFGCWLSGVD. A phosphoserine mark is found at S150 and S224. The residue at position 266 (T266) is a Phosphothreonine.

This sequence belongs to the peptidase M67A family. PSMD14 subfamily. In terms of assembly, component of the 19S proteasome regulatory particle complex. The 26S proteasome consists of a 20S core particle (CP) and two 19S regulatory subunits (RP). The regulatory particle is made of a lid composed of 9 subunits including PSMD4, a base containing 6 ATPases and few additional components. Within the complex, PSMD4 interacts with subunit PSMD7 through their respective MPN domain. Interacts with TXNL1. Widely expressed. Highest levels in heart and skeletal muscle.

Functionally, component of the 26S proteasome, a multiprotein complex involved in the ATP-dependent degradation of ubiquitinated proteins. This complex plays a key role in the maintenance of protein homeostasis by removing misfolded or damaged proteins, which could impair cellular functions, and by removing proteins whose functions are no longer required. Therefore, the proteasome participates in numerous cellular processes, including cell cycle progression, apoptosis, or DNA damage repair. The PSMD14 subunit is a metalloprotease that specifically cleaves 'Lys-63'-linked polyubiquitin chains within the complex. Plays a role in response to double-strand breaks (DSBs): acts as a regulator of non-homologous end joining (NHEJ) by cleaving 'Lys-63'-linked polyubiquitin, thereby promoting retention of JMJD2A/KDM4A on chromatin and restricting TP53BP1 accumulation. Also involved in homologous recombination repair by promoting RAD51 loading. In Homo sapiens (Human), this protein is 26S proteasome non-ATPase regulatory subunit 14 (PSMD14).